Reading from the N-terminus, the 688-residue chain is Elongation factor G (688 aa).

The 275-residue stretch at 6–280 (KLFRNFGIMA…AVVDFLPSPI (275 aa)) folds into the tr-type G domain. GTP is bound by residues 15–22 (AHIDAGKT), 79–83 (DTPGH), and 133–136 (NKMD).

It belongs to the TRAFAC class translation factor GTPase superfamily. Classic translation factor GTPase family. EF-G/EF-2 subfamily.

It is found in the cytoplasm. Functionally, catalyzes the GTP-dependent ribosomal translocation step during translation elongation. During this step, the ribosome changes from the pre-translocational (PRE) to the post-translocational (POST) state as the newly formed A-site-bound peptidyl-tRNA and P-site-bound deacylated tRNA move to the P and E sites, respectively. Catalyzes the coordinated movement of the two tRNA molecules, the mRNA and conformational changes in the ribosome. The polypeptide is Elongation factor G (Ureaplasma urealyticum serovar 10 (strain ATCC 33699 / Western)).